Here is a 276-residue protein sequence, read N- to C-terminus: Secretagogin (276 aa).

6 consecutive EF-hand domains span residues 12 to 47 (LDAA…LLAK), 58 to 93 (NVQK…EDEN), 105 to 140 (DNSV…LFLH), 149 to 184 (ELEE…QENF), 197 to 232 (ERKR…MMEL), and 240 to 276 (VDLD…KINP). Residues D25, Y31, E36, S73, E75, R77, E82, D118, D120, S122, E129, D162, N164, D166, R168, D173, D210, S212, T214, E221, D254, N256, D258, K260, and E265 each coordinate Ca(2+).

It is found in the cytoplasm. Its subcellular location is the secreted. The protein resides in the cytoplasmic vesicle. The protein localises to the secretory vesicle membrane. The sequence is that of Secretagogin (Scgn) from Mus musculus (Mouse).